We begin with the raw amino-acid sequence, 434 residues long: NADH-quinone oxidoreductase subunit F 1 (434 aa).

Residue 54–63 (GRGGAGFPTG) coordinates NAD(+). 166-213 (GAGAYICGEETALLESLEGKKGQPRLKPPFPANMGLYGCPTTVNNVES) contacts FMN. [4Fe-4S] cluster-binding residues include C345, C348, C351, and C391.

The protein belongs to the complex I 51 kDa subunit family. FMN is required as a cofactor. Requires [4Fe-4S] cluster as cofactor.

It catalyses the reaction a quinone + NADH + 5 H(+)(in) = a quinol + NAD(+) + 4 H(+)(out). In terms of biological role, NDH-1 shuttles electrons from NADH, via FMN and iron-sulfur (Fe-S) centers, to quinones in the respiratory chain. The immediate electron acceptor for the enzyme in this species is believed to be ubiquinone. Couples the redox reaction to proton translocation (for every two electrons transferred, four hydrogen ions are translocated across the cytoplasmic membrane), and thus conserves the redox energy in a proton gradient. This chain is NADH-quinone oxidoreductase subunit F 1 (nuoF1), found in Rhizobium meliloti (strain 1021) (Ensifer meliloti).